The sequence spans 435 residues: MTTFSPREIVSELDRYIIGQHDAKRAVAIALRNRWRRQQLDPSLRDEVMPKNILMIGPTGVGKTEISRRLAKLAGAPFIKVEATKFTEVGYVGRDVEQIIRDLVEVGIGLVREKKRTEVQAKAHVSAEERVLDALVGTTASPATRESFRKKLRDGELDDKEIDIEVADAGSGMGGFEIPGMPGANIGVLNLSEMFGKAMGGRTKKVRTTVKASYTDLIRDESDKLIDNEVIQREAVRSTENDGIVFLDEIDKIAARDGGMGAGVSREGVQRDLLPLVEGTTVSTKYGPVKTDHILFIASGAFHVSKPSDLLPELQGRLPIRVELRPLNKEDFRRILTETEASLIRQYRALMETESLNLEFTDDAIDALADVAVHLNSSVENIGARRLQTVMERVLDDISYNAPDRGGTAVTIDAAYVREHVGDLAQNTDLSRFIL.

Residues isoleucine 18, glycine 60–glutamate 65, aspartate 248, glutamate 313, and arginine 385 each bind ATP.

The protein belongs to the ClpX chaperone family. HslU subfamily. A double ring-shaped homohexamer of HslV is capped on each side by a ring-shaped HslU homohexamer. The assembly of the HslU/HslV complex is dependent on binding of ATP.

The protein resides in the cytoplasm. ATPase subunit of a proteasome-like degradation complex; this subunit has chaperone activity. The binding of ATP and its subsequent hydrolysis by HslU are essential for unfolding of protein substrates subsequently hydrolyzed by HslV. HslU recognizes the N-terminal part of its protein substrates and unfolds these before they are guided to HslV for hydrolysis. The protein is ATP-dependent protease ATPase subunit HslU of Rhizobium leguminosarum bv. trifolii (strain WSM2304).